We begin with the raw amino-acid sequence, 578 residues long: Proteasome-associated ATPase (578 aa).

Residues 35 to 84 are a coiled coil; sequence RHLTALEEQLGAARTRLAQVSAQNDRLATTLREARDQIVALKAEVDRLGQ. 266 to 271 contributes to the ATP binding site; sequence GCGKTL. The interval 577 to 578 is docks into pockets in the proteasome alpha-ring; that stretch reads YL.

Belongs to the AAA ATPase family. As to quaternary structure, homohexamer. Assembles into a hexameric ring structure that caps the 20S proteasome core. Strongly interacts with the prokaryotic ubiquitin-like protein Pup through a hydrophobic interface; the interacting region of ARC lies in its N-terminal coiled-coil domain. There is one Pup binding site per ARC hexamer ring. Upon ATP-binding, the C-terminus of ARC interacts with the alpha-rings of the proteasome core, possibly by binding to the intersubunit pockets.

It participates in protein degradation; proteasomal Pup-dependent pathway. Functionally, ATPase which is responsible for recognizing, binding, unfolding and translocation of pupylated proteins into the bacterial 20S proteasome core particle. May be essential for opening the gate of the 20S proteasome via an interaction with its C-terminus, thereby allowing substrate entry and access to the site of proteolysis. Thus, the C-termini of the proteasomal ATPase may function like a 'key in a lock' to induce gate opening and therefore regulate proteolysis. The chain is Proteasome-associated ATPase from Kineococcus radiotolerans (strain ATCC BAA-149 / DSM 14245 / SRS30216).